The chain runs to 221 residues: GTP cyclohydrolase 1 (221 aa).

Zn(2+)-binding residues include Cys-109, His-112, and Cys-180.

This sequence belongs to the GTP cyclohydrolase I family. In terms of assembly, toroid-shaped homodecamer, composed of two pentamers of five dimers.

It catalyses the reaction GTP + H2O = 7,8-dihydroneopterin 3'-triphosphate + formate + H(+). Its pathway is cofactor biosynthesis; 7,8-dihydroneopterin triphosphate biosynthesis; 7,8-dihydroneopterin triphosphate from GTP: step 1/1. This chain is GTP cyclohydrolase 1, found in Blochmanniella pennsylvanica (strain BPEN).